We begin with the raw amino-acid sequence, 479 residues long: Aspartyl/glutamyl-tRNA(Asn/Gln) amidotransferase subunit B (479 aa).

Belongs to the GatB/GatE family. GatB subfamily. Heterotrimer of A, B and C subunits.

It carries out the reaction L-glutamyl-tRNA(Gln) + L-glutamine + ATP + H2O = L-glutaminyl-tRNA(Gln) + L-glutamate + ADP + phosphate + H(+). It catalyses the reaction L-aspartyl-tRNA(Asn) + L-glutamine + ATP + H2O = L-asparaginyl-tRNA(Asn) + L-glutamate + ADP + phosphate + 2 H(+). Allows the formation of correctly charged Asn-tRNA(Asn) or Gln-tRNA(Gln) through the transamidation of misacylated Asp-tRNA(Asn) or Glu-tRNA(Gln) in organisms which lack either or both of asparaginyl-tRNA or glutaminyl-tRNA synthetases. The reaction takes place in the presence of glutamine and ATP through an activated phospho-Asp-tRNA(Asn) or phospho-Glu-tRNA(Gln). The chain is Aspartyl/glutamyl-tRNA(Asn/Gln) amidotransferase subunit B from Streptococcus pyogenes serotype M12 (strain MGAS2096).